A 278-amino-acid polypeptide reads, in one-letter code: HTH-type transcriptional regulator TsaQ1/TsaQ2 (278 aa).

The HTH iclR-type domain maps to 19–80 (VHSLAKGLEI…PRSRKLAMGA (62 aa)). Positions 40–59 (NQQLVELTGLPKATVSRLTS) form a DNA-binding region, H-T-H motif. In terms of domain architecture, IclR-ED spans 95-266 (LQRIARPHME…VQDIQAEMRA (172 aa)).

Functionally, both copies function as additional regulators for the tsa locus, specifically for tsaT. This chain is HTH-type transcriptional regulator TsaQ1/TsaQ2 (tsaQ1), found in Comamonas testosteroni (Pseudomonas testosteroni).